The primary structure comprises 185 residues: HTH-type transcriptional regulator Hpr (185 aa).

The HTH marR-type domain occupies 13–157 (AMIFSQRIAQ…LIAILRNIYG (145 aa)). Positions 63 to 86 (ISEIAKFGVMHVSTAFNFSKKLEE) form a DNA-binding region, H-T-H motif.

In terms of assembly, homodimer.

Its function is as follows. Negative regulator of protease production and sporulation. This chain is HTH-type transcriptional regulator Hpr, found in Bacillus cereus (strain G9842).